The primary structure comprises 109 residues: Probable cytochrome b-c1 complex subunit 7 (109 aa).

The protein belongs to the UQCRB/QCR7 family. As to quaternary structure, component of the ubiquinol-cytochrome c oxidoreductase (cytochrome b-c1 complex, complex III, CIII), a multisubunit enzyme composed of 3 respiratory subunits cytochrome b, cytochrome c1 and Rieske protein, 2 core protein subunits, and additional low-molecular weight protein subunits. The complex exists as an obligatory dimer and forms supercomplexes (SCs) in the inner mitochondrial membrane with cytochrome c oxidase (complex IV, CIV).

The protein resides in the mitochondrion inner membrane. Functionally, component of the ubiquinol-cytochrome c oxidoreductase, a multisubunit transmembrane complex that is part of the mitochondrial electron transport chain which drives oxidative phosphorylation. The respiratory chain contains 3 multisubunit complexes succinate dehydrogenase (complex II, CII), ubiquinol-cytochrome c oxidoreductase (cytochrome b-c1 complex, complex III, CIII) and cytochrome c oxidase (complex IV, CIV), that cooperate to transfer electrons derived from NADH and succinate to molecular oxygen, creating an electrochemical gradient over the inner membrane that drives transmembrane transport and the ATP synthase. The cytochrome b-c1 complex catalyzes electron transfer from ubiquinol to cytochrome c, linking this redox reaction to translocation of protons across the mitochondrial inner membrane, with protons being carried across the membrane as hydrogens on the quinol. In the process called Q cycle, 2 protons are consumed from the matrix, 4 protons are released into the intermembrane space and 2 electrons are passed to cytochrome c. This is Probable cytochrome b-c1 complex subunit 7 from Dictyostelium discoideum (Social amoeba).